Consider the following 474-residue polypeptide: Glycogen synthase (474 aa).

Residue Lys12 coordinates ADP-alpha-D-glucose.

It belongs to the glycosyltransferase 1 family. Bacterial/plant glycogen synthase subfamily.

The enzyme catalyses [(1-&gt;4)-alpha-D-glucosyl](n) + ADP-alpha-D-glucose = [(1-&gt;4)-alpha-D-glucosyl](n+1) + ADP + H(+). Its pathway is glycan biosynthesis; glycogen biosynthesis. Synthesizes alpha-1,4-glucan chains using ADP-glucose. The polypeptide is Glycogen synthase (Xanthomonas axonopodis pv. citri (strain 306)).